The following is a 230-amino-acid chain: Cytidylate kinase (230 aa).

12-20 (GPSGTGKST) provides a ligand contact to ATP.

The protein belongs to the cytidylate kinase family. Type 1 subfamily.

It is found in the cytoplasm. The enzyme catalyses CMP + ATP = CDP + ADP. It catalyses the reaction dCMP + ATP = dCDP + ADP. This is Cytidylate kinase from Corynebacterium efficiens (strain DSM 44549 / YS-314 / AJ 12310 / JCM 11189 / NBRC 100395).